Reading from the N-terminus, the 568-residue chain is DNA ligase 2 (568 aa).

An ATP-binding site is contributed by glutamate 254. The active-site N6-AMP-lysine intermediate is the lysine 256. Residues arginine 261, arginine 276, glutamate 306, phenylalanine 346, arginine 425, and lysine 431 each contribute to the ATP site.

Belongs to the ATP-dependent DNA ligase family. The cofactor is Mg(2+).

It catalyses the reaction ATP + (deoxyribonucleotide)n-3'-hydroxyl + 5'-phospho-(deoxyribonucleotide)m = (deoxyribonucleotide)n+m + AMP + diphosphate.. In terms of biological role, DNA ligase that seals nicks in double-stranded DNA during DNA replication, DNA recombination and DNA repair. The sequence is that of DNA ligase 2 from Methanosarcina mazei (strain ATCC BAA-159 / DSM 3647 / Goe1 / Go1 / JCM 11833 / OCM 88) (Methanosarcina frisia).